The following is a 131-amino-acid chain: T3C protein (131 aa).

The sequence is that of T3C protein from Ovis aries (Sheep).